A 267-amino-acid chain; its full sequence is Putative N-acetylmuramoyl-L-alanine amidase RC0497 (267 aa).

Residues 1–25 (MSKSKAIENNGISNTNSPNGKYMAP) are disordered. A compositionally biased stretch (polar residues) spans 10-19 (NGISNTNSPN). Positions 33–141 (TCVVITYSVS…NLDLKHDLVG (109 aa)) constitute an N-acetylmuramoyl-L-alanine amidase domain.

Belongs to the N-acetylmuramoyl-L-alanine amidase 2 family.

It localises to the secreted. The enzyme catalyses Hydrolyzes the link between N-acetylmuramoyl residues and L-amino acid residues in certain cell-wall glycopeptides.. In Rickettsia conorii (strain ATCC VR-613 / Malish 7), this protein is Putative N-acetylmuramoyl-L-alanine amidase RC0497.